The sequence spans 220 residues: uncharacterized protein (220 aa).

The stretch at 165–202 (DKYEDLISDYNKIMEKYREVIKSEIEKYKALSKRKNDI) forms a coiled coil.

This is an uncharacterized protein from Pasteurella multocida (strain Pm70).